A 101-amino-acid polypeptide reads, in one-letter code: uncharacterized protein (101 aa).

A helical membrane pass occupies residues 72 to 94 (ILCPSFLNYSFINIYCFGPYTMV).

It localises to the membrane. This is an uncharacterized protein from Schizosaccharomyces pombe (strain 972 / ATCC 24843) (Fission yeast).